Here is a 170-residue protein sequence, read N- to C-terminus: Protein-lysine myristoyltransferase HlyC (170 aa).

H23 is an active-site residue. H151 contacts heme.

Belongs to the RTX toxin acyltransferase family. In terms of assembly, monomer. Post-translationally, proteolytically cleaved by the protease systems ClpAP, ClpXP and FtsH, leading to its degradation.

The protein resides in the cytoplasm. It carries out the reaction tetradecanoyl-[ACP] + L-lysyl-[protein] = N(6)-tetradecanoyl-L-lysyl-[protein] + holo-[ACP] + H(+). Its activity is regulated as follows. The acyltransferase activity is inhibited by heme. Functionally, protein-lysine myristoyltransferase that catalyzes myristoylation of the protoxin (HlyA) at two internal lysine residues, thereby converting it to the active toxin. The sequence is that of Protein-lysine myristoyltransferase HlyC from Escherichia coli.